A 725-amino-acid chain; its full sequence is IML2-like protein SCY_3392 (725 aa).

Phosphothreonine is present on threonine 196. Serine 246, serine 377, and serine 380 each carry phosphoserine.

The protein belongs to the IML2 family.

The protein resides in the cytoplasm. It is found in the nucleus. Functionally, may be involved in mitochondrial DNA stability. The polypeptide is IML2-like protein SCY_3392 (Saccharomyces cerevisiae (strain YJM789) (Baker's yeast)).